Reading from the N-terminus, the 104-residue chain is Large ribosomal subunit protein bL21 (104 aa).

The protein belongs to the bacterial ribosomal protein bL21 family. In terms of assembly, part of the 50S ribosomal subunit. Contacts protein L20.

Functionally, this protein binds to 23S rRNA in the presence of protein L20. In Leptospira borgpetersenii serovar Hardjo-bovis (strain JB197), this protein is Large ribosomal subunit protein bL21.